A 471-amino-acid chain; its full sequence is Desmin (471 aa).

The segment at 2 to 109 is head; it reads SQAYSSSQRV…QEFLTTRTNE (108 aa). Serine 7 carries the phosphoserine; by CDK1 modification. Serine 12 is subject to Phosphoserine; by AURKB. The residue at position 16 (arginine 16) is an Omega-N-methylarginine. Threonine 17 bears the Phosphothreonine; by AURKB and ROCK1 mark. Position 28 is a phosphoserine; by CDK1 (serine 28). The residue at position 31 (serine 31) is a Phosphoserine. Serine 32 bears the Phosphoserine; by CDK1 mark. At arginine 37 the chain carries Asymmetric dimethylarginine; alternate. At arginine 37 the chain carries Omega-N-methylarginine; alternate. Serine 45 carries the post-translational modification Phosphoserine. Arginine 58 carries the post-translational modification ADP-ribosylarginine. Position 60 is a phosphoserine; by AURKB (serine 60). Residue arginine 70 is modified to Omega-N-methylarginine. Threonine 77 is subject to Phosphothreonine; by ROCK1. Serine 81 carries the phosphoserine modification. Positions 109–417 constitute an IF rod domain; that stretch reads EKVELQELND…KLLEGEESRI (309 aa). The tract at residues 110-142 is coil 1A; sequence KVELQELNDRFANYIEKVRFLEQQNAALAAEVN. The linker 1 stretch occupies residues 143–152; it reads RLKGREPTRV. Positions 153 to 253 are coil 1B; the sequence is AEIYEEELRE…HEEEIRELQA (101 aa). Residues 254–269 are linker 12; sequence QLQEQQVQVEMDMSKP. The interval 269-416 is interaction with NEB; the sequence is PDLTAALRDI…RKLLEGEESR (148 aa). Residues 270–288 form a coil 2A region; the sequence is DLTAALRDIRAQYETIAAK. Residues 289–296 form a linker 2 region; the sequence is NISEAEEW. Phosphoserine occurs at positions 291, 359, 362, and 425. The segment at 297–413 is coil 2B; that stretch reads YKSKVSDLTQ…ATYRKLLEGE (117 aa). The interval 414–471 is tail; it reads ESRINLPIQTFSALNFRETSPEQRGSEVHTKKTVMIKTIETRDGEVVSEATQQQHEVL. Residues 439 to 454 form an interaction with CRYAB region; it reads SEVHTKKTVMIKTIET.

It belongs to the intermediate filament family. As to quaternary structure, homomer. Interacts with DST. Interacts with MTM1. Interacts with EPPK1; interaction is dependent of higher-order structure of intermediate filament. Interacts with CRYAB. Interacts with NEB (via nebulin repeats 160-164). Interacts (via rod region) with NEBL (via nebulin repeats 1-5). Interacts with ASB2; the interaction targets DES for proteasomal degradation. Interacts with PKP1. Interacts with FLII. In terms of processing, ADP-ribosylation prevents ability to form intermediate filaments. Post-translationally, phosphorylation at Ser-7, Ser-28 and Ser-32 by CDK1 and phosphorylation at Ser-60 by AURKB contribute to efficient separation of desmin intermediate filaments during mitosis. Ubiquitination by a SCF-like complex containing ASB2 leads to proteasomal degradation.

It is found in the cytoplasm. The protein localises to the myofibril. It localises to the sarcomere. The protein resides in the z line. Its subcellular location is the cell membrane. It is found in the sarcolemma. The protein localises to the nucleus. It localises to the cell tip. The protein resides in the nucleus envelope. Functionally, muscle-specific type III intermediate filament essential for proper muscular structure and function. Plays a crucial role in maintaining the structure of sarcomeres, inter-connecting the Z-disks and forming the myofibrils, linking them not only to the sarcolemmal cytoskeleton, but also to the nucleus and mitochondria, thus providing strength for the muscle fiber during activity. In adult striated muscle they form a fibrous network connecting myofibrils to each other and to the plasma membrane from the periphery of the Z-line structures. May act as a sarcomeric microtubule-anchoring protein: specifically associates with detyrosinated tubulin-alpha chains, leading to buckled microtubules and mechanical resistance to contraction. Required for nuclear membrane integrity, via anchoring at the cell tip and nuclear envelope, resulting in maintenance of microtubule-derived intracellular mechanical forces. Contributes to the transcriptional regulation of the NKX2-5 gene in cardiac progenitor cells during a short period of cardiomyogenesis and in cardiac side population stem cells in the adult. Plays a role in maintaining an optimal conformation of nebulette (NEB) on heart muscle sarcomeres to bind and recruit cardiac alpha-actin. In Sus scrofa (Pig), this protein is Desmin (DES).